The primary structure comprises 184 residues: CASP-like protein 1U1 (184 aa).

Residues 1-30 are Cytoplasmic-facing; the sequence is MSSTGTTLSASEGDKGFRNGAAPAKSKSHS. A helical membrane pass occupies residues 31 to 51; it reads TIALLRLLAFAATLSAFVTMI. Residues 52 to 76 are Extracellular-facing; it reads TNKQKITIGPFTRWSKWHYSDAFMW. The chain crosses the membrane as a helical span at residues 77–97; the sequence is FVVANCIAFIYLLFAAILGLI. Residues 98–111 are Cytoplasmic-facing; it reads SHSPMLVKHLVILD. A helical transmembrane segment spans residues 112 to 132; the sequence is LIVSYMLFSAASAATAVAYIG. The Extracellular segment spans residues 133–154; that stretch reads KNGISQPGWTAICGVFERYCHH. The chain crosses the membrane as a helical span at residues 155–175; that stretch reads VAGALVACFLGWLFLTIAVFL. Residues 176–184 are Cytoplasmic-facing; that stretch reads GMRRSPAAV.

Belongs to the Casparian strip membrane proteins (CASP) family. As to quaternary structure, homodimer and heterodimers.

The protein localises to the cell membrane. This chain is CASP-like protein 1U1, found in Marchantia polymorpha (Common liverwort).